Reading from the N-terminus, the 85-residue chain is Scratcher peptide (85 aa).

The signal sequence occupies residues 1–24 (MTSVQSVTCCCLLWLMLSVQPITP). The propeptide occupies 25 to 38 (GSPGPAQLSRERSF). Position 47 is a 4-carboxyglutamate (E47). Position 67 is an aspartic acid 1-amide (D67). A propeptide spanning residues 68 to 85 (KRDVVSPRIRRRKRSKAM) is cleaved from the precursor.

The protein belongs to the conotoxin J superfamily. Post-translationally, contains 2 disulfide bonds. As to expression, expressed by the venom duct.

The protein localises to the secreted. Causes scratching in mice. The protein is Scratcher peptide of Conus geographus (Geography cone).